The chain runs to 332 residues: MENIIFSPLSSLPSIVEELNPYKIAVLTNDMLKSLWLDKIIELLGGDVFPIVIPDGEEYKTIETAIKIWDELVSFGFTRKSLLIGLGGGVITDIAGFVASTYMRGTLLGFIPTTLLAQVDAAIGGKTGVNFHGKNMIGTFYLPNFVLISTETLSTLPRIELLNGMAEVIKYAILDKNVYRLLQDVKNVEEIRNREDIIRESVNVKVRVVEEDLKESGKRRILNLGHTVGHAIEKLSGYKIKHGFAVSVGLIAAAKLGEKLYNFDSGKVIELVERFNLPTKLPYPPKDIIEAMKLDKKAWYGKIVFVIPVEIGRISIEDVPEELLLQVLGEIR.

Residues 55-60, 89-93, 113-114, Lys-126, Lys-134, and 152-155 contribute to the NAD(+) site; these read DGEEYK, GVITD, TT, and TLST. Glu-167, His-226, and His-242 together coordinate Zn(2+).

It belongs to the sugar phosphate cyclases superfamily. Dehydroquinate synthase family. Requires NAD(+) as cofactor. Co(2+) is required as a cofactor. Zn(2+) serves as cofactor.

The protein resides in the cytoplasm. The catalysed reaction is 7-phospho-2-dehydro-3-deoxy-D-arabino-heptonate = 3-dehydroquinate + phosphate. The protein operates within metabolic intermediate biosynthesis; chorismate biosynthesis; chorismate from D-erythrose 4-phosphate and phosphoenolpyruvate: step 2/7. In terms of biological role, catalyzes the conversion of 3-deoxy-D-arabino-heptulosonate 7-phosphate (DAHP) to dehydroquinate (DHQ). This Pyrococcus abyssi (strain GE5 / Orsay) protein is 3-dehydroquinate synthase.